Consider the following 59-residue polypeptide: Temporin-CDYe (59 aa).

Residues 1–22 (MFTLKKSMLLLLFLGTISLTLC) form the signal peptide. Positions 23–42 (EEERDANEEEENGGEVKVEE) are excised as a propeptide.

It belongs to the frog skin active peptide (FSAP) family. Temporin subfamily. Expressed by the skin glands.

It is found in the secreted. Its function is as follows. Antimicrobial peptide. The protein is Temporin-CDYe of Rana dybowskii (Dybovsky's frog).